We begin with the raw amino-acid sequence, 51 residues long: Magnetosome protein Mms5 (51 aa).

Residues 1–12 (MLSAKGVSLGLG) lie on the Lumenal side of the membrane. The tract at residues 9 to 16 (LGLGLGLG) is LG region. Residues 13-33 (LGLGAWGPVLLGVVGVAGAIA) traverse the membrane as a helical segment. At 34-51 (LYGYYKNRNAEPAAAEAV) the chain is on the cytoplasmic side.

This sequence belongs to the magnetosome MamD/Mms5 family. Post-translationally, seen in gels as a band of about 5 kDa, with an N-terminus that corresponds to residue 8, suggesting it may undergo N-terminal cleavage.

It localises to the magnetosome membrane. Functionally, might be involved in magnetite crystal growth. This Paramagnetospirillum magneticum (strain ATCC 700264 / AMB-1) (Magnetospirillum magneticum) protein is Magnetosome protein Mms5.